The primary structure comprises 96 residues: Uteroglobin (96 aa).

Positions 1-21 (MKIAITITVVMLSICCSSASS) are cleaved as a signal peptide.

The protein belongs to the secretoglobin family. Antiparallel homodimer; disulfide-linked. Interaction with LMBR1L is controversial. As to expression, club cells (nonciliated cells of the surface epithelium of the pulmonary airways).

The protein resides in the secreted. Binds phosphatidylcholine, phosphatidylinositol, polychlorinated biphenyls (PCB) and weakly progesterone, potent inhibitor of phospholipase A2. This is Uteroglobin (Scgb1a1) from Mus musculus (Mouse).